We begin with the raw amino-acid sequence, 365 residues long: 1-aminocyclopropane-1-carboxylate oxidase homolog 1 (365 aa).

In terms of domain architecture, Fe2OG dioxygenase spans 212 to 313; it reads CTNSLLLLGH…RISVACFFSS (102 aa). Fe cation contacts are provided by H238, D240, and H294.

This sequence belongs to the iron/ascorbate-dependent oxidoreductase family. Requires Fe cation as cofactor.

The sequence is that of 1-aminocyclopropane-1-carboxylate oxidase homolog 1 from Arabidopsis thaliana (Mouse-ear cress).